Reading from the N-terminus, the 203-residue chain is 2-phospho-L-lactate guanylyltransferase (203 aa).

This sequence belongs to the CofC family. In terms of assembly, homodimer.

The catalysed reaction is (2S)-2-phospholactate + GTP + H(+) = (2S)-lactyl-2-diphospho-5'-guanosine + diphosphate. The protein operates within cofactor biosynthesis; coenzyme F420 biosynthesis. Guanylyltransferase that catalyzes the activation of (2S)-2-phospholactate (2-PL) as (2S)-lactyl-2-diphospho-5'-guanosine, via the condensation of 2-PL with GTP. It is involved in the biosynthesis of coenzyme F420, a hydride carrier cofactor. In Halomicrobium mukohataei (strain ATCC 700874 / DSM 12286 / JCM 9738 / NCIMB 13541) (Haloarcula mukohataei), this protein is 2-phospho-L-lactate guanylyltransferase.